The following is a 238-amino-acid chain: tRNA (guanine-N(7)-)-methyltransferase (238 aa).

Residues M1–D12 are compositionally biased toward polar residues. Positions M1–S20 are disordered. S-adenosyl-L-methionine-binding residues include E70, D95, D122, and D145. D145 is an active-site residue. Residues K149, D181, and T216–E219 each bind substrate.

This sequence belongs to the class I-like SAM-binding methyltransferase superfamily. TrmB family.

It catalyses the reaction guanosine(46) in tRNA + S-adenosyl-L-methionine = N(7)-methylguanosine(46) in tRNA + S-adenosyl-L-homocysteine. It participates in tRNA modification; N(7)-methylguanine-tRNA biosynthesis. Functionally, catalyzes the formation of N(7)-methylguanine at position 46 (m7G46) in tRNA. The protein is tRNA (guanine-N(7)-)-methyltransferase of Neisseria meningitidis serogroup C (strain 053442).